The chain runs to 83 residues: Small ribosomal subunit protein bS16 (83 aa).

The protein belongs to the bacterial ribosomal protein bS16 family.

The chain is Small ribosomal subunit protein bS16 from Shewanella baltica (strain OS223).